We begin with the raw amino-acid sequence, 527 residues long: Berberine bridge enzyme-like 5 (527 aa).

Positions 1–19 are cleaved as a signal peptide; that stretch reads MKALFSVLCLVLLVSILRA. Cysteines 32 and 95 form a disulfide. 2 N-linked (GlcNAc...) asparagine glycosylation sites follow: asparagine 35 and asparagine 52. Residues 73–247 enclose the FAD-binding PCMH-type domain; it reads NYQKLVAIVA…LSWKINLVEV (175 aa). Positions 110 to 172 form a cross-link, 6-(S-cysteinyl)-8alpha-(pros-histidyl)-FAD (His-Cys); that stretch reads HDYEGLSYTS…QTLAFPAGVC (63 aa). Asparagine 341 carries N-linked (GlcNAc...) asparagine glycosylation.

It belongs to the oxygen-dependent FAD-linked oxidoreductase family. FAD serves as cofactor. In terms of processing, the FAD cofactor is bound via a bicovalent 6-S-cysteinyl, 8alpha-N1-histidyl FAD linkage.

The protein localises to the secreted. It is found in the cell wall. Probable flavin-dependent oxidoreductase. This Arabidopsis thaliana (Mouse-ear cress) protein is Berberine bridge enzyme-like 5.